A 114-amino-acid polypeptide reads, in one-letter code: Hemerythrin subunit 1 (114 aa).

Fe cation contacts are provided by histidine 26, histidine 55, glutamate 59, histidine 74, histidine 78, histidine 102, and aspartate 107.

It belongs to the hemerythrin family.

Functionally, hemerythrin is a respiratory protein in blood cells of certain marine worms. The oxygen-binding site in each chain contains two iron atoms. In Golfingia vulgaris (Marine worm), this protein is Hemerythrin subunit 1.